The chain runs to 950 residues: Translation initiation factor IF-2 (950 aa).

Composition is skewed to basic and acidic residues over residues 128–158, 165–186, 200–234, and 291–312; these read KPKV…EAKA, AEVK…EKKK, KRAE…DNRR, and NRRD…DGNR. The segment at 128–354 is disordered; sequence KPKVAEPVKK…NNQSSSVPAT (227 aa). Polar residues-rich tracts occupy residues 322–336 and 343–353; these read NRNQ…NWNQ and YQNNQSSSVPA. Positions 448-619 constitute a tr-type G domain; the sequence is ERPAVVTIMG…LLVAEVQELK (172 aa). Residues 457–464 are G1; the sequence is GHVDHGKT. Residue 457–464 participates in GTP binding; the sequence is GHVDHGKT. The G2 stretch occupies residues 482-486; sequence GITQH. The tract at residues 503–506 is G3; the sequence is DTPG. GTP is bound by residues 503 to 507 and 557 to 560; these read DTPGH and NKID. A G4 region spans residues 557-560; sequence NKID. The interval 595-597 is G5; that stretch reads SAK.

It belongs to the TRAFAC class translation factor GTPase superfamily. Classic translation factor GTPase family. IF-2 subfamily.

The protein localises to the cytoplasm. Its function is as follows. One of the essential components for the initiation of protein synthesis. Protects formylmethionyl-tRNA from spontaneous hydrolysis and promotes its binding to the 30S ribosomal subunits. Also involved in the hydrolysis of GTP during the formation of the 70S ribosomal complex. The polypeptide is Translation initiation factor IF-2 (Lactococcus lactis subsp. cremoris (strain MG1363)).